Here is a 330-residue protein sequence, read N- to C-terminus: Phosphate acyltransferase (330 aa).

It belongs to the PlsX family. As to quaternary structure, homodimer. Probably interacts with PlsY.

It localises to the cytoplasm. It carries out the reaction a fatty acyl-[ACP] + phosphate = an acyl phosphate + holo-[ACP]. Its pathway is lipid metabolism; phospholipid metabolism. In terms of biological role, catalyzes the reversible formation of acyl-phosphate (acyl-PO(4)) from acyl-[acyl-carrier-protein] (acyl-ACP). This enzyme utilizes acyl-ACP as fatty acyl donor, but not acyl-CoA. The chain is Phosphate acyltransferase from Teredinibacter turnerae (strain ATCC 39867 / T7901).